A 129-amino-acid chain; its full sequence is Capsid protein (129 aa).

Residues 31-104 (EWISSNSRSQ…FATNSDCELI (74 aa)) are viral RNA-binding.

This sequence belongs to the Leviviricetes capsid protein family. In terms of assembly, homodimer. The capsid proteins form dimers that assemble by group of 5. Twelve such pentamers are linked together with free dimers. The homodimers binds to the viral RNA via an operator hairpin, but also to many other RNA sequences in the viral genome; this interaction probably shifts the virus from the replicative to the assembly phase and ensures specific encapsidation of the viral genome.

Its subcellular location is the virion. Its function is as follows. Capsid protein self-assembles to form an icosahedral capsid with a T=3 symmetry, about 26 nm in diameter, and consisting of 89 capsid proteins dimers (178 capsid proteins). Involved in viral genome encapsidation through the interaction between a capsid protein dimer and the multiple packaging signals present in the RNA genome. The capsid also contains 1 copy of the A2 maturation protein. Acts as a translational repressor of viral replicase synthesis late in infection. This latter function is the result of capsid protein interaction with an RNA hairpin which contains the replicase ribosome-binding site. This chain is Capsid protein, found in Escherichia coli (Bacteriophage R17).